The primary structure comprises 306 residues: MPIKIPTELPAFKVLSNENIFVMNDSRAKTQDIRPLKIAILNLMPKKILAENQLLRHLSNTPLQVEVKLIQTKSYVSQNTPIEHLEKFYTYFDDIKEEKFDGLIITGAPVEQMEFEDITYWNELTEIMEWSKSNIFSTLHICWGAQAGLYYHYNIPKYKLENKISGVFSHWVNDENADLTRGLDDVFHVPHSRHTEVKKEDINKISELEILSESKEAGIFIVATKNRRKIFFMGHPEYDRNTLKEEYLRDREKGDDVEIPQNYFVDNDINSTPKFTWRGSSNIIFGNWLNYCVYQNTPYDINEISE.

Residue Cys-142 is the Acyl-thioester intermediate of the active site. 2 residues coordinate substrate: Lys-163 and Ser-192. His-235 serves as the catalytic Proton acceptor. The active site involves Glu-237. Residue Arg-249 participates in substrate binding.

The protein belongs to the MetA family.

Its subcellular location is the cytoplasm. The enzyme catalyses L-homoserine + acetyl-CoA = O-acetyl-L-homoserine + CoA. It functions in the pathway amino-acid biosynthesis; L-methionine biosynthesis via de novo pathway; O-acetyl-L-homoserine from L-homoserine: step 1/1. In terms of biological role, transfers an acetyl group from acetyl-CoA to L-homoserine, forming acetyl-L-homoserine. The chain is Homoserine O-acetyltransferase from Clostridium botulinum (strain Alaska E43 / Type E3).